The chain runs to 131 residues: Small ribosomal subunit protein uS8 (131 aa).

It belongs to the universal ribosomal protein uS8 family. As to quaternary structure, part of the 30S ribosomal subunit. Contacts proteins S5 and S12.

Its function is as follows. One of the primary rRNA binding proteins, it binds directly to 16S rRNA central domain where it helps coordinate assembly of the platform of the 30S subunit. The polypeptide is Small ribosomal subunit protein uS8 (Cupriavidus necator (strain ATCC 17699 / DSM 428 / KCTC 22496 / NCIMB 10442 / H16 / Stanier 337) (Ralstonia eutropha)).